The following is a 230-amino-acid chain: Protein FAM3A (230 aa).

A signal peptide spans Met-1–Gly-33. 2 disulfide bridges follow: Cys-59–Cys-87 and Cys-65–Cys-222. The 159-residue stretch at Glu-68–Arg-226 folds into the GG-type lectin domain.

The protein belongs to the FAM3 family.

It localises to the secreted. The polypeptide is Protein FAM3A (FAM3A) (Pongo abelii (Sumatran orangutan)).